The sequence spans 173 residues: Co-chaperone protein HscB homolog (173 aa).

Positions 5-77 (CHYALFDLQP…PRRARYLLAI (73 aa)) constitute a J domain.

The protein belongs to the HscB family. Interacts with HscA and stimulates its ATPase activity.

Functionally, co-chaperone involved in the maturation of iron-sulfur cluster-containing proteins. Seems to help targeting proteins to be folded toward HscA. The protein is Co-chaperone protein HscB homolog of Pseudomonas putida (strain ATCC 700007 / DSM 6899 / JCM 31910 / BCRC 17059 / LMG 24140 / F1).